The following is a 138-amino-acid chain: Protein NrdI (138 aa).

Belongs to the NrdI family.

Probably involved in ribonucleotide reductase function. In Beutenbergia cavernae (strain ATCC BAA-8 / DSM 12333 / CCUG 43141 / JCM 11478 / NBRC 16432 / NCIMB 13614 / HKI 0122), this protein is Protein NrdI.